Here is a 175-residue protein sequence, read N- to C-terminus: MISIKSFQIGEKEIVIAILFDKKIQGITFSFDGEQFLQERVNALVEHLTNRGVKVNLEERDSELPALVYKILIGEIRNQDGLEYLSFEGTTPFEKKVYETLTKKVKRGEVITYGELAKMLRSSPRAIGGAMKRNPYPIIVPCHRVIASNNIGNYTPKREYKRFLLETEGVKTWTS.

Cys-142 (nucleophile; methyl group acceptor) is an active-site residue.

The protein belongs to the MGMT family.

It localises to the cytoplasm. It carries out the reaction a 6-O-methyl-2'-deoxyguanosine in DNA + L-cysteinyl-[protein] = S-methyl-L-cysteinyl-[protein] + a 2'-deoxyguanosine in DNA. The catalysed reaction is a 4-O-methyl-thymidine in DNA + L-cysteinyl-[protein] = a thymidine in DNA + S-methyl-L-cysteinyl-[protein]. Its function is as follows. Involved in the cellular defense against the biological effects of O6-methylguanine (O6-MeG) and O4-methylthymine (O4-MeT) in DNA. Repairs the methylated nucleobase in DNA by stoichiometrically transferring the methyl group to a cysteine residue in the enzyme. This is a suicide reaction: the enzyme is irreversibly inactivated. This is Methylated-DNA--protein-cysteine methyltransferase from Thermococcus sibiricus (strain DSM 12597 / MM 739).